The primary structure comprises 399 residues: Protein shisa-8 (399 aa).

The signal sequence occupies residues 1–36; the sequence is MERAGARGQRCGRRSHGLPLALRLALLLAGSPSGRA. At 37-136 the chain is on the extracellular side; the sequence is GAPEEQEIAG…APRDPARERS (100 aa). The N-linked (GlcNAc...) asparagine glycan is linked to Asn73. A helical transmembrane segment spans residues 137-157; sequence HTAVYAVCGVAALLVLVGIGA. The Cytoplasmic portion of the chain corresponds to 158-399; that stretch reads RLGLERAHSP…STNSKAEVTV (242 aa). Disordered stretches follow at residues 207–248 and 378–399; these read GDGV…GGSL and FYSS…EVTV. The segment covering 389-399 has biased composition (polar residues); that stretch reads LSTNSKAEVTV.

The protein belongs to the shisa family. Interacts with AMPAR subunits GRIA1 and GRIA2. Brain-specific. Highly expressed in cerebellum and olfactory bulb.

The protein resides in the membrane. Functionally, may regulate trafficking and current kinetics of AMPA-type glutamate receptor (AMPAR) at synapses. This chain is Protein shisa-8, found in Mus musculus (Mouse).